A 251-amino-acid chain; its full sequence is Tachykinins (251 aa).

The signal sequence occupies residues M1–A21. Residues Q22–S25 constitute a propeptide that is removed on maturation. Arginine amide is present on R36. A propeptide spanning residues K39–Y50 is cleaved from the precursor. K61 carries the lysine amide modification. The propeptide occupies S65–D163. Residue R176 is modified to Arginine amide. The propeptide occupies S180–N183. R199 bears the Arginine amide mark. Residues D203–P223 constitute a propeptide that is removed on maturation. Residue R235 is modified to Arginine amide. The propeptide occupies W239–N251.

Belongs to the tachykinin family. Tachykinin-related peptide 1: Expressed in antennal lobe (AL) and gnathal ganglion (GNG) (at protein level). Expression in AL detected in all animals, in GNG in most animals (at protein level). Not expressed in corpora cardiaca (CC) and corpora allata (CA) (at protein level). Tachykinin-related peptide 2: Expressed in antennal lobe (AL) corpora cardiaca (CC) and corpora allata (CA) with expression detected in few animals (at protein level). Not expressed in gnathal ganglion (GNG) (at protein level). Tachykinin-related peptide 4: Expressed in corpora cardiaca (CC), corpora allata (CA), antennal lobe (AL) and gnathal ganglion (GNG) (at protein level). Expression in AL and GNG detected in most animals, in CC and CA detected in few animals (at protein level). Tachykinin-related peptide 5: Expressed in corpora cardiaca (CC), corpora allata (CA), antennal lobe (AL) and gnathal ganglion (GNG) (at protein level). Expression in CC and CA detected in some animals, in AL and GNG in few animals (at protein level). Tachykinin-related peptide 6: Expressed in antennal lobe (AL) and gnathal ganglion (GNG) (at protein level). Expression in AL detected in all animals, in GNG in some animals (at protein level). Not expressed in corpora cardiaca (CC) and corpora allata (CA) (at protein level).

Its subcellular location is the secreted. Tachykinins are active peptides which excite neurons, evoke behavioral responses, are potent vasodilators and secretagogues, and contract (directly or indirectly) many smooth muscles. This is Tachykinins from Agrotis ipsilon (Black cutworm moth).